Here is a 334-residue protein sequence, read N- to C-terminus: Tetraacyldisaccharide 4'-kinase (334 aa).

60 to 67 provides a ligand contact to ATP; sequence TVGGTGKT.

It belongs to the LpxK family.

It catalyses the reaction a lipid A disaccharide + ATP = a lipid IVA + ADP + H(+). It functions in the pathway glycolipid biosynthesis; lipid IV(A) biosynthesis; lipid IV(A) from (3R)-3-hydroxytetradecanoyl-[acyl-carrier-protein] and UDP-N-acetyl-alpha-D-glucosamine: step 6/6. In terms of biological role, transfers the gamma-phosphate of ATP to the 4'-position of a tetraacyldisaccharide 1-phosphate intermediate (termed DS-1-P) to form tetraacyldisaccharide 1,4'-bis-phosphate (lipid IVA). The chain is Tetraacyldisaccharide 4'-kinase from Stutzerimonas stutzeri (strain A1501) (Pseudomonas stutzeri).